The chain runs to 282 residues: Bis(5'-nucleosyl)-tetraphosphatase, symmetrical (282 aa).

This sequence belongs to the Ap4A hydrolase family.

The enzyme catalyses P(1),P(4)-bis(5'-adenosyl) tetraphosphate + H2O = 2 ADP + 2 H(+). In terms of biological role, hydrolyzes diadenosine 5',5'''-P1,P4-tetraphosphate to yield ADP. The protein is Bis(5'-nucleosyl)-tetraphosphatase, symmetrical of Salmonella paratyphi A (strain ATCC 9150 / SARB42).